The sequence spans 586 residues: Anaerobic glycerol-3-phosphate dehydrogenase subunit A1 (586 aa).

An FAD-binding site is contributed by serine 6–glutamate 34. A disordered region spans residues glycine 559–asparagine 586. Residues alanine 574–asparagine 586 show a composition bias toward acidic residues.

This sequence belongs to the FAD-dependent glycerol-3-phosphate dehydrogenase family. In terms of assembly, composed of a catalytic GlpA/B dimer and of membrane bound GlpC. Requires FAD as cofactor. It depends on FMN as a cofactor.

It is found in the cell membrane. It catalyses the reaction a quinone + sn-glycerol 3-phosphate = dihydroxyacetone phosphate + a quinol. It participates in polyol metabolism; glycerol degradation via glycerol kinase pathway; glycerone phosphate from sn-glycerol 3-phosphate (anaerobic route): step 1/1. Its activity is regulated as follows. Up-regulated by glycerol and no inhibition by glucose. Conversion of glycerol 3-phosphate to dihydroxyacetone phosphate. Required for growth on glycerol and for glycerol metabolism. The protein is Anaerobic glycerol-3-phosphate dehydrogenase subunit A1 (gpdA1) of Haloferax volcanii (strain ATCC 29605 / DSM 3757 / JCM 8879 / NBRC 14742 / NCIMB 2012 / VKM B-1768 / DS2) (Halobacterium volcanii).